Reading from the N-terminus, the 164-residue chain is UPF0304 protein HSM_1818 (164 aa).

The protein belongs to the UPF0304 family.

The chain is UPF0304 protein HSM_1818 from Histophilus somni (strain 2336) (Haemophilus somnus).